Reading from the N-terminus, the 87-residue chain is MAKEELLELDGIVDEVLPDSKYRVTLENGVVVGAYASGRMRKNHIRILAGDRVTLELSVYDLTKGRINFRHKDANSPRPPRTGQPRR.

Residues 1 to 72 form the S1-like domain; the sequence is MAKEELLELD…TKGRINFRHK (72 aa). The disordered stretch occupies residues 68–87; it reads NFRHKDANSPRPPRTGQPRR. Pro residues predominate over residues 77 to 87; sequence PRPPRTGQPRR.

The protein belongs to the IF-1 family. As to quaternary structure, component of the 30S ribosomal translation pre-initiation complex which assembles on the 30S ribosome in the order IF-2 and IF-3, IF-1 and N-formylmethionyl-tRNA(fMet); mRNA recruitment can occur at any time during PIC assembly.

It is found in the cytoplasm. One of the essential components for the initiation of protein synthesis. Stabilizes the binding of IF-2 and IF-3 on the 30S subunit to which N-formylmethionyl-tRNA(fMet) subsequently binds. Helps modulate mRNA selection, yielding the 30S pre-initiation complex (PIC). Upon addition of the 50S ribosomal subunit IF-1, IF-2 and IF-3 are released leaving the mature 70S translation initiation complex. This chain is Translation initiation factor IF-1 1, found in Burkholderia lata (strain ATCC 17760 / DSM 23089 / LMG 22485 / NCIMB 9086 / R18194 / 383).